The following is a 665-amino-acid chain: MGTRRDVRFVSSGVKLPCADAAPAPAPAPTLLSAALPFARIGRAIDGVVRHVARSLPRLPVARAETGAGAAAAPIALPRRQKDGGGGGGGEERVLISEVAVRGKDGEPLERPELEAAAAAALRACRPNAALTVREVQEDVHRVVESGLFRSCMPVAVDTRDGIRLVFEVEPNQDFHGLVCEGANMLPSKFLEDAFHDRHGKIINIRHLDQVIKSVNGWYQERGLTGLVSYAEILSGGILRLQVSEAEVNNINIRFLDRRTGEPTVGKTQPETILRHLTTKKGQAYNRAQVKRDVETILTMGIMEDVTIIPQPVGDSNKVDLVMNLVERPSGGFSAGGGISSGITNGPLSGLIGSFAYSHRNVFGRNKKLNLSLERGQIDSIFRLNYTDPWIDGDNKRTSRTIMVQNSRTPGTLIHGGDHPDHGPITIGRVTAGIEYSRPFRPKWSGTLGLIFQHAGARDDKGNPIIRDFYNSQLTASGNAYDDTLLAKLESVYTDSGDRSSTMFVFNIEQGLPILPEWLSFNRVTARLRQGYEIGPARLLLSASGGHVEGNFSPHEAFAIGGTNSVRGYEEGAVGSGRSYAVGSGEVSCRMFGPLEGVVFGDYGSDLSSGPKVPGDPAGARGKPGSGYGYGVGVRVDSPLGPLRLEYAFNDKQARRFHFGVGYRN.

In terms of domain architecture, POTRA spans Ala246–Arg328.

The protein belongs to the OEP80 (TC 1.B.33.2) family.

It is found in the plastid. The protein localises to the chloroplast outer membrane. The chain is Outer envelope protein 80, chloroplastic (OEP80) from Oryza sativa subsp. japonica (Rice).